The sequence spans 452 residues: Transcription factor AP-2-delta (452 aa).

At Ser239 the chain carries Phosphoserine; by PKA. The segment at 280–410 (RRKAANVTLL…VLSEMLNYLE (131 aa)) is H-S-H (helix-span-helix), dimerization. The interval 416 to 452 (KNGGAADSGQGHANSEKAPLRKASEAAVKEGKTEKTD) is disordered. Residues 429 to 452 (NSEKAPLRKASEAAVKEGKTEKTD) are compositionally biased toward basic and acidic residues.

It belongs to the AP-2 family. In terms of assembly, binds DNA as a dimer. Can form homodimers or heterodimers with other AP-2 family members. As to expression, expressed in both embryonic and newborn brain.

It is found in the nucleus. Functionally, sequence-specific DNA-binding protein that interacts with inducible viral and cellular enhancer elements to regulate transcription of selected genes. AP-2 factors bind to the consensus sequence 5'-GCCNNNGGC-3' and activate genes involved in a large spectrum of important biological functions including proper eye, face, body wall, limb and neural tube development. They also suppress a number of genes including MCAM/MUC18, C/EBP alpha and MYC. The polypeptide is Transcription factor AP-2-delta (Tfap2d) (Mus musculus (Mouse)).